We begin with the raw amino-acid sequence, 62 residues long: uncharacterized protein (62 aa).

It belongs to the asfivirus C62L family.

This is an uncharacterized protein from African swine fever virus (isolate Tick/South Africa/Pretoriuskop Pr4/1996) (ASFV).